A 242-amino-acid chain; its full sequence is Zinc import ATP-binding protein ZnuC (242 aa).

The ABC transporter domain maps to 24 to 241; it reads INVENLSFFY…EKFLKMFSSY (218 aa). Position 56 to 63 (56 to 63) interacts with ATP; that stretch reads GPNGGGKT.

This sequence belongs to the ABC transporter superfamily. Zinc importer (TC 3.A.1.15.5) family. The complex is composed of two ATP-binding proteins (ZnuC), two transmembrane proteins (ZnuB) and a solute-binding protein (ZnuA).

The protein resides in the cell inner membrane. It carries out the reaction Zn(2+)(out) + ATP(in) + H2O(in) = Zn(2+)(in) + ADP(in) + phosphate(in) + H(+)(in). Part of the ABC transporter complex ZnuABC involved in zinc import. Responsible for energy coupling to the transport system. The polypeptide is Zinc import ATP-binding protein ZnuC (Ehrlichia chaffeensis (strain ATCC CRL-10679 / Arkansas)).